Reading from the N-terminus, the 213-residue chain is MKAYQREFIEFALEKQVLKFGEFTLKSGRKSPYFFNAGLFNTGRDLARLGRFYAAALADSGIEFDVLFGPAYKGIPIATTTAVALADHHDIDTPYCFNRKEAKDHGEGGNLVGSALEGRIMLVDDVITAGTAIRESMEIIQANGADLAGVLVAIDRQEKGKGELSAIQEVERDFACAVISIVSLSDLITFLEEKGDAAEHLDAVKAYRAQYGI.

Lys-26 lines the 5-phospho-alpha-D-ribose 1-diphosphate pocket. Residue 34 to 35 (FF) coordinates orotate. 5-phospho-alpha-D-ribose 1-diphosphate-binding positions include 72 to 73 (YK), Arg-99, Lys-100, Lys-103, His-105, and 124 to 132 (DDVITAGTA). Orotate is bound by residues Thr-128 and Arg-156.

It belongs to the purine/pyrimidine phosphoribosyltransferase family. PyrE subfamily. As to quaternary structure, homodimer. Mg(2+) is required as a cofactor.

It catalyses the reaction orotidine 5'-phosphate + diphosphate = orotate + 5-phospho-alpha-D-ribose 1-diphosphate. The protein operates within pyrimidine metabolism; UMP biosynthesis via de novo pathway; UMP from orotate: step 1/2. Functionally, catalyzes the transfer of a ribosyl phosphate group from 5-phosphoribose 1-diphosphate to orotate, leading to the formation of orotidine monophosphate (OMP). In Vibrio vulnificus (strain CMCP6), this protein is Orotate phosphoribosyltransferase.